Here is a 1726-residue protein sequence, read N- to C-terminus: Transcription elongation factor SPT6 (1726 aa).

Composition is skewed to acidic residues over residues 1–14 (MSDF…ESEE), 32–49 (EEED…DDQD), and 59–80 (NDDD…DSED). The disordered stretch occupies residues 1–197 (MSDFVESEAE…DDGQPLKKPK (197 aa)). N-acetylserine is present on Ser2. The segment at 2 to 485 (SDFVESEAEE…PKMQNAAKAS (484 aa)) is interaction with IWS1. Residues 2 to 916 (SDFVESEAEE…PPVLRQAVSL (915 aa)) are interaction with PAAF1. Residues 3 to 51 (DFVESEAEESEEEYNHEGEVVPRVTKKFVEEEDDDEEEEEENLDDQDER) adopt a coiled-coil conformation. Ser7 and Ser12 each carry phosphoserine. Residues Ser73, Ser78, and Ser91 each carry the phosphoserine modification. Positions 95-105 (RLEDDDFDLIE) are enriched in acidic residues. Residues 111 to 122 (KVKRGQKYRRVK) show a composition bias toward basic residues. The residue at position 125 (Ser125) is a Phosphoserine. Acidic residues-rich tracts occupy residues 126–136 (DDDEDDEEEYG), 150–160 (FQDEEGEEGQE), and 169–190 (PDEE…DDDG). Ser267 is subject to Phosphoserine. Residues 317-1300 (ADWIYRNAFA…NEWKLPKDTY (984 aa)) are interaction with KDM6A. The disordered stretch occupies residues 489-520 (LKRIKEDGDEEGEGEEAEDEEQRGPELKQASR). Positions 495 to 509 (DGDEEGEGEEAEDEE) are enriched in acidic residues. Basic and acidic residues predominate over residues 510–520 (QRGPELKQASR). The residue at position 743 (Lys743) is an N6-acetyllysine. One can recognise an S1 motif domain in the interval 1213-1282 (WNHFDSGSCP…EKFSADLTCR (70 aa)). Residues 1325–1431 (YIKRVIAHPS…FARDLLNHKY (107 aa)) form the SH2 domain. Tyr1515 carries the post-translational modification Phosphotyrosine. Residue Thr1523 is modified to Phosphothreonine. Ser1526 carries the post-translational modification Phosphoserine. Thr1530 and Thr1532 each carry phosphothreonine. Phosphoserine is present on Ser1535. Phosphothreonine is present on Thr1539. Residues 1633-1726 (PQYHQLQAST…ATPLLDEMDR (94 aa)) form an interaction with histone H2B and H3 region. Positions 1636–1726 (HQLQASTTPQ…ATPLLDEMDR (91 aa)) are disordered. Residues 1639 to 1664 (QASTTPQSTQAQPQPSSSSRQRQQQP) are compositionally biased toward low complexity. The residue at position 1676 (Lys1676) is an N6-acetyllysine. Thr1697 is subject to Phosphothreonine. Ser1701 and Ser1703 each carry phosphoserine. Residues Thr1709 and Thr1718 each carry the phosphothreonine modification.

This sequence belongs to the SPT6 family. In terms of assembly, interacts with RNA polymerase II and the DRB sensitivity-inducing factor complex (DSIF complex), which is composed of SUPT5H and SUPT4H1 or SUPT4H2. Interacts with PAAF1. Interacts with histone H2B and H3. Interacts (via SH2 domain) with POLR2A phosphorylated at 'Ser-2'. Interacts (via SH2 domain) with SETD1A. Interacts with IWS1, KDM6A and AICDA. Interacts with WDR43. Post-translationally, dephosphorylated at Ser-1530 by the PNUTS-PP1 complex during RNA polymerase II transcription pause-release. Ubiquitously expressed.

The protein localises to the nucleus. Functionally, histone H3-H4 chaperone that plays a key role in the regulation of transcription elongation and mRNA processing. Enhances the transcription elongation by RNA polymerase II (RNAPII) and is also required for the efficient activation of transcriptional elongation by the HIV-1 nuclear transcriptional activator, Tat. Besides chaperoning histones in transcription, acts to transport and splice mRNA by forming a complex with IWS1 and the C-terminal domain (CTD) of the RNAPII subunit RPB1 (POLR2A). The SUPT6H:IWS1:CTD complex recruits mRNA export factors (ALYREF/THOC4, EXOSC10) as well as histone modifying enzymes (such as SETD2), to ensure proper mRNA splicing, efficient mRNA export and elongation-coupled H3K36 methylation, a signature chromatin mark of active transcription. SUPT6H via its association with SETD1A, regulates both class-switch recombination and somatic hypermutation through formation of H3K4me3 epigenetic marks on activation-induced cytidine deaminase (AICDA) target loci. Promotes the activation of the myogenic gene program by entailing erasure of the repressive H3K27me3 epigenetic mark through stabilization of the chromatin interaction of the H3K27 demethylase KDM6A. The polypeptide is Transcription elongation factor SPT6 (Supt6h) (Mus musculus (Mouse)).